The sequence spans 362 residues: MNAPTRTPPPSNGGHGSTGSTGSTGDAAPGGGTGRGPAATARGHAALAKTQVLIEALPWLSRFQGATIVVKYGGNAMTEPALREAFAADVVFLRHSGLRVVVVHGGGPQITAHLERLGVPSTFVGGLRVTTPQTMDVVRMVLLGQVNRDVVGLVNDHGPFAVGLSGEDANLFTARRRPAIVDGREVDVGLVGDIVEVRPETINALLGSGKVPVVASVARGVDGGVYNVNADTAAAELAVALGATKLVVLTDVEGLYADWPASDEVISELSITELEQLLPSLTAGMIPKMEACRRAVRGGVPQAHVLDGRVPHAVLLEIFTDDGIGTLIMAESGTSPEPGTPPAPAARPAGIVPAGEPTGGTP.

Residues 1 to 11 (MNAPTRTPPPS) show a composition bias toward pro residues. Residues 1-42 (MNAPTRTPPPSNGGHGSTGSTGSTGDAAPGGGTGRGPAATAR) are disordered. Residues 106-107 (GG), arginine 128, and asparagine 227 each bind substrate. Residues 329–362 (MAESGTSPEPGTPPAPAARPAGIVPAGEPTGGTP) are disordered. Positions 346–355 (ARPAGIVPAG) are enriched in low complexity.

It belongs to the acetylglutamate kinase family. ArgB subfamily.

It is found in the cytoplasm. It carries out the reaction N-acetyl-L-glutamate + ATP = N-acetyl-L-glutamyl 5-phosphate + ADP. It participates in amino-acid biosynthesis; L-arginine biosynthesis; N(2)-acetyl-L-ornithine from L-glutamate: step 2/4. In terms of biological role, catalyzes the ATP-dependent phosphorylation of N-acetyl-L-glutamate. This Frankia casuarinae (strain DSM 45818 / CECT 9043 / HFP020203 / CcI3) protein is Acetylglutamate kinase.